Consider the following 616-residue polypeptide: Dihydroxy-acid dehydratase (616 aa).

Residue Asp81 coordinates Mg(2+). Cys122 contributes to the [2Fe-2S] cluster binding site. Mg(2+)-binding residues include Asp123 and Lys124. Position 124 is an N6-carboxylysine (Lys124). Cys195 serves as a coordination point for [2Fe-2S] cluster. Mg(2+) is bound at residue Glu491. The active-site Proton acceptor is the Ser517.

The protein belongs to the IlvD/Edd family. Homodimer. The cofactor is [2Fe-2S] cluster. Mg(2+) is required as a cofactor.

The catalysed reaction is (2R)-2,3-dihydroxy-3-methylbutanoate = 3-methyl-2-oxobutanoate + H2O. The enzyme catalyses (2R,3R)-2,3-dihydroxy-3-methylpentanoate = (S)-3-methyl-2-oxopentanoate + H2O. It participates in amino-acid biosynthesis; L-isoleucine biosynthesis; L-isoleucine from 2-oxobutanoate: step 3/4. It functions in the pathway amino-acid biosynthesis; L-valine biosynthesis; L-valine from pyruvate: step 3/4. Functions in the biosynthesis of branched-chain amino acids. Catalyzes the dehydration of (2R,3R)-2,3-dihydroxy-3-methylpentanoate (2,3-dihydroxy-3-methylvalerate) into 2-oxo-3-methylpentanoate (2-oxo-3-methylvalerate) and of (2R)-2,3-dihydroxy-3-methylbutanoate (2,3-dihydroxyisovalerate) into 2-oxo-3-methylbutanoate (2-oxoisovalerate), the penultimate precursor to L-isoleucine and L-valine, respectively. The protein is Dihydroxy-acid dehydratase of Shewanella loihica (strain ATCC BAA-1088 / PV-4).